The sequence spans 180 residues: Large ribosomal subunit protein uL22 (180 aa).

A disordered region spans residues 111-180; sequence VVVESRPAKD…ETSDAKGGSD (70 aa). A compositionally biased stretch (basic residues) spans 142–166; it reads PAKKAPAKKAPAKKAPAKTAAKKTP. The segment covering 171-180 has biased composition (basic and acidic residues); it reads ETSDAKGGSD.

It belongs to the universal ribosomal protein uL22 family. As to quaternary structure, part of the 50S ribosomal subunit.

In terms of biological role, this protein binds specifically to 23S rRNA; its binding is stimulated by other ribosomal proteins, e.g. L4, L17, and L20. It is important during the early stages of 50S assembly. It makes multiple contacts with different domains of the 23S rRNA in the assembled 50S subunit and ribosome. Its function is as follows. The globular domain of the protein is located near the polypeptide exit tunnel on the outside of the subunit, while an extended beta-hairpin is found that lines the wall of the exit tunnel in the center of the 70S ribosome. The sequence is that of Large ribosomal subunit protein uL22 from Mycobacterium avium (strain 104).